Here is a 478-residue protein sequence, read N- to C-terminus: Glutamyl-tRNA reductase (478 aa).

Substrate is bound by residues 49-52 (TCNR), S109, 114-116 (EQQ), and Q120. C50 (nucleophile) is an active-site residue. NADP(+) is bound at residue 191-196 (GAGSMG).

The protein belongs to the glutamyl-tRNA reductase family. As to quaternary structure, homodimer.

It carries out the reaction (S)-4-amino-5-oxopentanoate + tRNA(Glu) + NADP(+) = L-glutamyl-tRNA(Glu) + NADPH + H(+). It functions in the pathway porphyrin-containing compound metabolism; protoporphyrin-IX biosynthesis; 5-aminolevulinate from L-glutamyl-tRNA(Glu): step 1/2. Catalyzes the NADPH-dependent reduction of glutamyl-tRNA(Glu) to glutamate 1-semialdehyde (GSA). In Rhodococcus opacus (strain B4), this protein is Glutamyl-tRNA reductase.